The following is a 214-amino-acid chain: Adenylate kinase (214 aa).

Residue G11 to T16 coordinates ATP. The tract at residues S31–V61 is NMP. AMP is bound by residues S32, R37, L59–V61, G87–R90, and Q94. The interval L124 to D163 is LID. Position 125 (R125) interacts with ATP. C128 and C131 together coordinate Zn(2+). ATP is bound at residue I134–Y135. Zn(2+) is bound by residues C150 and C153. The AMP site is built by R160 and R171. ATP is bound at residue K199.

It belongs to the adenylate kinase family. In terms of assembly, monomer.

It localises to the cytoplasm. The catalysed reaction is AMP + ATP = 2 ADP. It participates in purine metabolism; AMP biosynthesis via salvage pathway; AMP from ADP: step 1/1. Functionally, catalyzes the reversible transfer of the terminal phosphate group between ATP and AMP. Plays an important role in cellular energy homeostasis and in adenine nucleotide metabolism. This Mycoplasmoides gallisepticum (strain R(low / passage 15 / clone 2)) (Mycoplasma gallisepticum) protein is Adenylate kinase.